Reading from the N-terminus, the 287-residue chain is Lipoyl synthase (287 aa).

The [4Fe-4S] cluster site is built by Cys-34, Cys-39, Cys-45, Cys-60, Cys-64, Cys-67, and Ser-273. The Radical SAM core domain maps to 46 to 262 (WNKRHATVMI…KYIAYSKGFL (217 aa)).

The protein belongs to the radical SAM superfamily. Lipoyl synthase family. [4Fe-4S] cluster is required as a cofactor.

Its subcellular location is the cytoplasm. The enzyme catalyses [[Fe-S] cluster scaffold protein carrying a second [4Fe-4S](2+) cluster] + N(6)-octanoyl-L-lysyl-[protein] + 2 oxidized [2Fe-2S]-[ferredoxin] + 2 S-adenosyl-L-methionine + 4 H(+) = [[Fe-S] cluster scaffold protein] + N(6)-[(R)-dihydrolipoyl]-L-lysyl-[protein] + 4 Fe(3+) + 2 hydrogen sulfide + 2 5'-deoxyadenosine + 2 L-methionine + 2 reduced [2Fe-2S]-[ferredoxin]. Its pathway is protein modification; protein lipoylation via endogenous pathway; protein N(6)-(lipoyl)lysine from octanoyl-[acyl-carrier-protein]: step 2/2. Its function is as follows. Catalyzes the radical-mediated insertion of two sulfur atoms into the C-6 and C-8 positions of the octanoyl moiety bound to the lipoyl domains of lipoate-dependent enzymes, thereby converting the octanoylated domains into lipoylated derivatives. The sequence is that of Lipoyl synthase from Wolbachia sp. subsp. Drosophila simulans (strain wRi).